Here is a 940-residue protein sequence, read N- to C-terminus: Phosphoenolpyruvate carboxylase (940 aa).

Residues H138 and K603 contribute to the active site.

This sequence belongs to the PEPCase type 1 family. Mg(2+) serves as cofactor.

The catalysed reaction is oxaloacetate + phosphate = phosphoenolpyruvate + hydrogencarbonate. Functionally, forms oxaloacetate, a four-carbon dicarboxylic acid source for the tricarboxylic acid cycle. This Streptococcus thermophilus (strain CNRZ 1066) protein is Phosphoenolpyruvate carboxylase.